The primary structure comprises 433 residues: Oxysterol-binding protein-like protein OBPa (433 aa).

This sequence belongs to the OSBP family.

This Candida albicans (strain SC5314 / ATCC MYA-2876) (Yeast) protein is Oxysterol-binding protein-like protein OBPa (OBPA).